The primary structure comprises 431 residues: MNLKKLLTSAVLSISLCQSAFAAPVEIDKVIGIVNQGVILKSEVDTIVNRVKKQAEEQSQELPKDETLRVQAVERLVNQTLMMQMAERMGLEISDSQLDQTLASMAKEQGGSIADLRRTIEGSGESFQAYREEIRKEITTQQVMRANVDRRVYVSEQEVDNLLKIMESQGQNAEEYDIGHILIDIPSDASADEIASAKTRADKVIELLNDEQEFKRIAISSSSGSQALEGGQLGWMGINEMPSLFAEAVKGKKQGAIIGPLRSGAGFHIIKVQDVRGRQVVETTETRSRHILIKPSIILSEEKARSMLAGFVKDLRADKADFAKLAKEYSEDPGSALKGGEYDWADPTSYVPAFRDTLLSLKQNEISEPFRSQFGWHIVQLLDTRVADKTEQAKRNRAHGMLFNRKFKEESFNWQQEMREQAHVEIFPIDE.

Positions 1–22 (MNLKKLLTSAVLSISLCQSAFA) are cleaved as a signal peptide. PpiC domains follow at residues 173-274 (AEEY…KVQD) and 283-383 (TTET…QLLD).

It is found in the periplasm. The catalysed reaction is [protein]-peptidylproline (omega=180) = [protein]-peptidylproline (omega=0). In terms of biological role, chaperone involved in the correct folding and assembly of outer membrane proteins. Recognizes specific patterns of aromatic residues and the orientation of their side chains, which are found more frequently in integral outer membrane proteins. May act in both early periplasmic and late outer membrane-associated steps of protein maturation. This Pseudoalteromonas translucida (strain TAC 125) protein is Chaperone SurA.